Reading from the N-terminus, the 372-residue chain is 4-hydroxy-3-methylbut-2-en-1-yl diphosphate synthase (flavodoxin) (372 aa).

[4Fe-4S] cluster-binding residues include Cys-270, Cys-273, Cys-305, and Glu-312.

Belongs to the IspG family. [4Fe-4S] cluster is required as a cofactor.

The catalysed reaction is (2E)-4-hydroxy-3-methylbut-2-enyl diphosphate + oxidized [flavodoxin] + H2O + 2 H(+) = 2-C-methyl-D-erythritol 2,4-cyclic diphosphate + reduced [flavodoxin]. The protein operates within isoprenoid biosynthesis; isopentenyl diphosphate biosynthesis via DXP pathway; isopentenyl diphosphate from 1-deoxy-D-xylulose 5-phosphate: step 5/6. Its function is as follows. Converts 2C-methyl-D-erythritol 2,4-cyclodiphosphate (ME-2,4cPP) into 1-hydroxy-2-methyl-2-(E)-butenyl 4-diphosphate. The protein is 4-hydroxy-3-methylbut-2-en-1-yl diphosphate synthase (flavodoxin) of Salmonella typhi.